Here is a 72-residue protein sequence, read N- to C-terminus: uncharacterized protein (72 aa).

This is an uncharacterized protein from Bacillus subtilis (strain 168).